Consider the following 1143-residue polypeptide: DNA polymerase II large subunit (1143 aa).

This sequence belongs to the archaeal DNA polymerase II family. As to quaternary structure, heterodimer of a large subunit and a small subunit.

It catalyses the reaction DNA(n) + a 2'-deoxyribonucleoside 5'-triphosphate = DNA(n+1) + diphosphate. The catalysed reaction is Exonucleolytic cleavage in the 3'- to 5'-direction to yield nucleoside 5'-phosphates.. Its function is as follows. Possesses two activities: a DNA synthesis (polymerase) and an exonucleolytic activity that degrades single-stranded DNA in the 3'- to 5'-direction. Has a template-primer preference which is characteristic of a replicative DNA polymerase. This Archaeoglobus fulgidus (strain ATCC 49558 / DSM 4304 / JCM 9628 / NBRC 100126 / VC-16) protein is DNA polymerase II large subunit (polC).